The following is a 308-amino-acid chain: MTHTLNNELLASILEQVRPLAAQGKVADYIPALADVPADRLGIAVCTVGGECFAAGDADERFSIQSISKVLSLVLAMGRYDDDEIWERVGKDPSGQPFNSLVQLELEQGKPRNPFINAGALVVCDMLQSRLSAPKQRMLEVVRNLCGAPDIIYDTAVARSEFEHSARNAAIAYLMKSFGNFHNDVITVLQNYFHYCALKMSCAELARAFLFLANQGRAPHLDTPVISPVQARQVNALMATSGMYESSGEFAWRVGMPGKSGVGGGIIAVVPHEMSIAVWSPALDHAGNSLAGIAALEILAREIGRSIF.

Substrate-binding residues include serine 66, asparagine 117, glutamate 161, asparagine 168, tyrosine 192, tyrosine 244, and valine 262.

This sequence belongs to the glutaminase family. In terms of assembly, homotetramer.

It catalyses the reaction L-glutamine + H2O = L-glutamate + NH4(+). This Cronobacter sakazakii (strain ATCC BAA-894) (Enterobacter sakazakii) protein is Glutaminase.